Reading from the N-terminus, the 365-residue chain is Short-chain dehydrogenase iccH (365 aa).

Positions 16, 52, and 70 each coordinate NADP(+). N-linked (GlcNAc...) asparagine glycosylation occurs at asparagine 90. 4 residues coordinate NADP(+): asparagine 102, tyrosine 221, lysine 225, and serine 260. Tyrosine 221 (proton donor) is an active-site residue. Lysine 225 functions as the Lowers pKa of active site Tyr in the catalytic mechanism. Residues 267-287 (IWVMFLLMKFVLPLLAPLAVW) form a helical membrane-spanning segment. N-linked (GlcNAc...) asparagine glycans are attached at residues asparagine 291 and asparagine 324.

The protein belongs to the short-chain dehydrogenases/reductases (SDR) family.

Its subcellular location is the membrane. It participates in mycotoxin biosynthesis. Its function is as follows. NADH-dependent flavin oxidoreductase; part of the gene cluster that mediates the biosynthesis of ilicicolin H, a 4-hydroxy-2-pyridonealkaloid that has potent and broad antifungal activities by inhibiting the mitochondrial respiration chain. IccA to iccE are sufficient for ilicicolin H biosynthesis and the roles of the remaining enzymes, iccF, iccG and iccH within the pathway have still to be determined. The biosynthesis of ilicicolin H starts with formation of the tetramic acid by the hybrid PKS-NRPS synthetase iccA with the partnering trans-enoyl reductase iccB since iccA lacks a designated enoylreductase (ER) domain. The cytochrome P450 monooxygenase iccC then catalyzes the ring expansion of the tetramate to the acyclic 2-pyridone. The pericyclase iccD further converts the acyclic 2-pyridone into 8-epi-ilicicolin H. Finally, the epimerase iccE converts 8-epi-ilicicolin H into ilicicolin H via epimerizationd. This is Short-chain dehydrogenase iccH from Talaromyces variabilis (Penicillium variabile).